The following is a 1188-amino-acid chain: Oxysterol-binding protein homolog 1 (1188 aa).

3 ANK repeats span residues 51 to 80 (VLHLMLHYAVQVAPMAVIKEIVHHWVSTTN), 96 to 125 (NGNTPLHIAAYQSRGDIVAFLLDQPTINDC), and 196 to 225 (TGDTVLHEFVKKRDVIMCRWLLEHGADPFK). Positions 330-379 (MSSCSLHLDSSEKLKFEIIGGNNGVIRWHLKGNHPIETNRWVWAIQGAIR) constitute a PH domain. S394 is subject to Phosphoserine. Disordered regions lie at residues 415–546 (ATSK…GDED) and 661–692 (QKKLNNQPQVETEANEESDDANSMIKGSQEST). Residues 424 to 433 (PHLSKSTLTQ) are compositionally biased toward polar residues. Residues 443–462 (TNNNNNKSNNDYDDNNNNNN) are compositionally biased toward low complexity. Residues 463-473 (NDDDDYDDDDE) show a composition bias toward acidic residues. A phosphoserine mark is found at S490 and S500. The segment covering 514–529 (PSDDEGYSEDDSDDDG) has biased composition (acidic residues). A phosphoserine mark is found at S678, S683, and S691. Phosphothreonine occurs at positions 692 and 694. A phosphoserine mark is found at S708 and S712. An FFAT motif is present at residues 716 to 722 (EFFDAEE). The segment at 721–755 (EEAASDKKANDSEDLTTNKETPANAKPQEEAPEDE) is disordered. The interval 800–1174 (LWSVLKSMVG…YWKFNGEYWN (375 aa)) is OSBP-related domain (ORD). Residues D834 and K962 each coordinate ergosterol.

It belongs to the OSBP family. In terms of assembly, interacts with NVJ1. Interacts with the AAA ATPase AFG2; regulates OSH1 membrane association. AFG2 is required for membrane dissociation of OSH1. Interacts with SCS2.

The protein localises to the golgi apparatus membrane. The protein resides in the nucleus outer membrane. Its subcellular location is the endoplasmic reticulum membrane. It is found in the vacuole membrane. Lipid transport protein (LTP) involved in non-vesicular transfer of lipids between membranes. Functions in phosphoinositide-coupled directional transport of various lipids by carrying the lipid molecule in a hydrophobic pocket and transferring it between membranes through the cytosol. Involved in maintenance of intracellular sterol distribution and homeostasis. Involved in non-vesicular transport of ergosterol and PI(4)P at the NVJ. Binds sterol and PI4P in a mutually exclusive manner. May be involved in formation of PMN vesicles by altering the membrane lipid composition. This Saccharomyces cerevisiae (strain ATCC 204508 / S288c) (Baker's yeast) protein is Oxysterol-binding protein homolog 1.